Reading from the N-terminus, the 353-residue chain is Probable G-protein coupled receptor 139 (353 aa).

Residues 1–29 (MEHTHAHLAANSSLSWWSPGSACGLGFVP) are Extracellular-facing. The N-linked (GlcNAc...) asparagine glycan is linked to N11. Residues 30 to 50 (VVYYSLLLCLGLPANILTVII) traverse the membrane as a helical segment. Over 51–65 (LSQLVARRQKSSYNY) the chain is Cytoplasmic. A helical membrane pass occupies residues 66–86 (LLALAAADILVLFFIVFVDFL). Over 87–102 (LEDFILNMQMPQVPDK) the chain is Extracellular. Residues 103 to 123 (IIEVLEFSSIHTSIWITVPLT) traverse the membrane as a helical segment. The Cytoplasmic segment spans residues 124 to 148 (IDRYIAVCHPLKYHTVSYPARTRKV). Residues 149 to 169 (IVSVYITCFLTSIPYYWWPNI) traverse the membrane as a helical segment. At 170–181 (WTEDYISTSVHH) the chain is on the extracellular side. A helical membrane pass occupies residues 182–202 (VLIWIHCFTVYLVPCSIFFIL). Residues 203 to 228 (NSIIVYKLRRKSNFRLRGYSTGKTTA) lie on the Cytoplasmic side of the membrane. Residues 229–249 (ILFTITSIFATLWAPRIIMIL) form a helical membrane-spanning segment. The Extracellular portion of the chain corresponds to 250 to 268 (YHLYGAPIQNRWLVHIMSD). A helical membrane pass occupies residues 269 to 289 (IANMLALLNTAINFFLYCFIS). At 290 to 353 (KRFRTMAAAT…KNGKPIKVSP (64 aa)) the chain is on the cytoplasmic side.

The protein belongs to the G-protein coupled receptor 1 family. Expressed almost exclusively in the brain. Detected at very low levels in the peripheral tissues.

Its subcellular location is the cell membrane. Its function is as follows. Orphan receptor. Seems to act through a G(q/11)-mediated pathway. The sequence is that of Probable G-protein coupled receptor 139 (GPR139) from Homo sapiens (Human).